A 493-amino-acid chain; its full sequence is Protein nucleotidyltransferase YdiU (493 aa).

The ATP site is built by Gly-96, Gly-98, Arg-99, Lys-119, Asp-131, Gly-132, Arg-182, and Arg-189. The Proton acceptor role is filled by Asp-258. Asn-259 and Asp-268 together coordinate Mg(2+). Asp-268 serves as a coordination point for ATP. Positions 471–493 (EKYTEFKNPPAPKERVSQTFCGT) are disordered.

It belongs to the SELO family. The cofactor is Mg(2+). Requires Mn(2+) as cofactor.

The catalysed reaction is L-seryl-[protein] + ATP = 3-O-(5'-adenylyl)-L-seryl-[protein] + diphosphate. It catalyses the reaction L-threonyl-[protein] + ATP = 3-O-(5'-adenylyl)-L-threonyl-[protein] + diphosphate. The enzyme catalyses L-tyrosyl-[protein] + ATP = O-(5'-adenylyl)-L-tyrosyl-[protein] + diphosphate. It carries out the reaction L-histidyl-[protein] + UTP = N(tele)-(5'-uridylyl)-L-histidyl-[protein] + diphosphate. The catalysed reaction is L-seryl-[protein] + UTP = O-(5'-uridylyl)-L-seryl-[protein] + diphosphate. It catalyses the reaction L-tyrosyl-[protein] + UTP = O-(5'-uridylyl)-L-tyrosyl-[protein] + diphosphate. In terms of biological role, nucleotidyltransferase involved in the post-translational modification of proteins. It can catalyze the addition of adenosine monophosphate (AMP) or uridine monophosphate (UMP) to a protein, resulting in modifications known as AMPylation and UMPylation. This chain is Protein nucleotidyltransferase YdiU, found in Nitrosococcus oceani (strain ATCC 19707 / BCRC 17464 / JCM 30415 / NCIMB 11848 / C-107).